We begin with the raw amino-acid sequence, 178 residues long: 5,6,7,8-tetrahydromethanopterin hydro-lyase (178 aa).

Histidine 33 functions as the Proton donor in the catalytic mechanism. Substrate-binding residues include aspartate 35, leucine 64, lysine 82, threonine 84, and glutamine 99.

It belongs to the formaldehyde-activating enzyme family.

It is found in the cytoplasm. The enzyme catalyses 5,6,7,8-tetrahydromethanopterin + formaldehyde = 5,10-methylenetetrahydromethanopterin + H2O. In terms of biological role, catalyzes the condensation of formaldehyde with tetrahydromethanopterin (H(4)MPT) to 5,10-methylenetetrahydromethanopterin. This Methanosarcina barkeri (strain Fusaro / DSM 804) protein is 5,6,7,8-tetrahydromethanopterin hydro-lyase (faeA).